A 418-amino-acid polypeptide reads, in one-letter code: Endoglucanase EG-II (418 aa).

Residues Met-1–Ala-21 form the signal peptide. A Pyrrolidone carboxylic acid modification is found at Gln-22. Residues Gln-22–Ile-57 enclose the CBM1 domain. The tract at residues Pro-58–Ser-91 is linker. The disordered stretch occupies residues Ile-63–Ser-91. A catalytic region spans residues Gly-92–Lys-418. Cys-107 and Cys-113 are oxidised to a cystine. N-linked (GlcNAc) asparagine glycosylation occurs at Asn-124. Cys-183 and Cys-190 are joined by a disulfide. Glu-239 functions as the Proton donor/acceptor in the catalytic mechanism. 2 disulfides stabilise this stretch: Cys-323–Cys-359 and Cys-364–Cys-414. Catalysis depends on Glu-350, which acts as the Nucleophile.

It belongs to the glycosyl hydrolase 5 (cellulase A) family.

It is found in the secreted. It catalyses the reaction Endohydrolysis of (1-&gt;4)-beta-D-glucosidic linkages in cellulose, lichenin and cereal beta-D-glucans.. Endoglucanase (EG) that cleaves the internal beta-1,4-glucosidic bonds in cellulose. The degradation of cellulose involves an interplay between different cellulolytic enzymes. Hydrolysis starts with EGs, which cut internal glycosidic linkages to reduce the polymerization degree of the substrate and creates new chain ends for exocellobiohydrolases (CBHs). The CBH release the disaccharide cellobiose from the non-reducing end of the cellulose polymer chain. Finally, beta-1,4-glucosidases hydrolyze the cellobiose and other short cello-oligosaccharides into glucose units. In Hypocrea jecorina (strain ATCC 56765 / BCRC 32924 / NRRL 11460 / Rut C-30) (Trichoderma reesei), this protein is Endoglucanase EG-II (egl2).